The chain runs to 453 residues: Bifunctional protein GlmU (453 aa).

The segment at methionine 1–lysine 225 is pyrophosphorylase. Residues leucine 6 to glycine 9, lysine 20, glutamine 71, glycine 76 to threonine 77, tyrosine 98 to aspartate 100, glycine 135, glutamate 150, asparagine 165, and asparagine 223 each bind UDP-N-acetyl-alpha-D-glucosamine. Aspartate 100 serves as a coordination point for Mg(2+). Position 223 (asparagine 223) interacts with Mg(2+). A linker region spans residues glutamine 226 to alanine 246. Residues glycine 247–serine 453 are N-acetyltransferase. Positions 329 and 347 each coordinate UDP-N-acetyl-alpha-D-glucosamine. Histidine 359 functions as the Proton acceptor in the catalytic mechanism. Residues tyrosine 362 and asparagine 373 each contribute to the UDP-N-acetyl-alpha-D-glucosamine site. Acetyl-CoA-binding positions include alanine 376, asparagine 382–tyrosine 383, serine 401, and alanine 419.

In the N-terminal section; belongs to the N-acetylglucosamine-1-phosphate uridyltransferase family. The protein in the C-terminal section; belongs to the transferase hexapeptide repeat family. As to quaternary structure, homotrimer. Requires Mg(2+) as cofactor.

Its subcellular location is the cytoplasm. The catalysed reaction is alpha-D-glucosamine 1-phosphate + acetyl-CoA = N-acetyl-alpha-D-glucosamine 1-phosphate + CoA + H(+). It carries out the reaction N-acetyl-alpha-D-glucosamine 1-phosphate + UTP + H(+) = UDP-N-acetyl-alpha-D-glucosamine + diphosphate. The protein operates within nucleotide-sugar biosynthesis; UDP-N-acetyl-alpha-D-glucosamine biosynthesis; N-acetyl-alpha-D-glucosamine 1-phosphate from alpha-D-glucosamine 6-phosphate (route II): step 2/2. It participates in nucleotide-sugar biosynthesis; UDP-N-acetyl-alpha-D-glucosamine biosynthesis; UDP-N-acetyl-alpha-D-glucosamine from N-acetyl-alpha-D-glucosamine 1-phosphate: step 1/1. Its pathway is bacterial outer membrane biogenesis; LPS lipid A biosynthesis. Functionally, catalyzes the last two sequential reactions in the de novo biosynthetic pathway for UDP-N-acetylglucosamine (UDP-GlcNAc). The C-terminal domain catalyzes the transfer of acetyl group from acetyl coenzyme A to glucosamine-1-phosphate (GlcN-1-P) to produce N-acetylglucosamine-1-phosphate (GlcNAc-1-P), which is converted into UDP-GlcNAc by the transfer of uridine 5-monophosphate (from uridine 5-triphosphate), a reaction catalyzed by the N-terminal domain. This chain is Bifunctional protein GlmU, found in Paraburkholderia xenovorans (strain LB400).